We begin with the raw amino-acid sequence, 161 residues long: MFSNKKYIGLIDKYCEKKILDDSSTIKICYILIGILIGTNMITLIYNFIFWENYITCNQKDKTFYCPKDWVGYNNVCYYFGNDEKNYNNASNYCKQLNSTLTNNNTNLVNLTKTLNLTKTYNHESNYWVNYSLIKNESVLLRNSGYYKKQKHVSLLYICSK.

At 1 to 30 the chain is on the cytoplasmic side; it reads MFSNKKYIGLIDKYCEKKILDDSSTIKICY. A helical membrane pass occupies residues 31–51; it reads ILIGILIGTNMITLIYNFIFW. Residues 52 to 161 are Extracellular-facing; that stretch reads ENYITCNQKD…HVSLLYICSK (110 aa). Residues Cys-66 and Cys-77 are joined by a disulfide bond. Positions 66–160 are lectin-like; sequence CPKDWVGYNN…KHVSLLYICS (95 aa). 7 N-linked (GlcNAc...) asparagine; by host glycosylation sites follow: Asn-89, Asn-98, Asn-104, Asn-110, Asn-116, Asn-130, and Asn-136. Cys-94 and Cys-159 are joined by a disulfide.

This sequence belongs to the asfivirus lectin-like protein family. Homodimer.

The protein localises to the host endoplasmic reticulum membrane. In terms of biological role, down-regulates MHC-I expression by impairing the appropriate configuration or presentation into the plasma membrane of the latter. Participates in viral hemadsorption, which may help viral spread. Reduces the transactivating activity of host TP53, thus inhibiting apoptosis. Non-essential for virus growth in swine macrophage cell cultures. The polypeptide is Lectin-like protein EP153R (African swine fever virus (isolate Tick/Malawi/Lil 20-1/1983) (ASFV)).